The sequence spans 256 residues: Protein YIPF5 (256 aa).

Topologically, residues 1–125 are cytoplasmic; that stretch reads MSNFDNFNTD…ADGSIMNETD (125 aa). A helical membrane pass occupies residues 126–146; that stretch reads LAGPMVFCLAFGATLLLAGKI. Position 147 (Gln-147) is a topological domain, lumenal. The chain crosses the membrane as a helical span at residues 148 to 168; the sequence is FGYVYGISAMGCLGMYCLLNL. Over 169-172 the chain is Cytoplasmic; it reads MSMT. A helical membrane pass occupies residues 173 to 193; the sequence is GVSFGCVSSVLGYCLLPMIIL. Residues 194–195 are Lumenal-facing; that stretch reads ST. Residues 196–216 form a helical membrane-spanning segment; the sequence is FAVIFSLQGILGIVLAALIIG. Topologically, residues 217-235 are cytoplasmic; it reads WCSFSASKIFISALAMDGQ. Residues 236-256 form a helical membrane-spanning segment; that stretch reads QLLVAYPCALLYGVFALISVF.

It belongs to the YIP1 family.

The protein resides in the endoplasmic reticulum membrane. Its subcellular location is the golgi apparatus. The protein localises to the cis-Golgi network membrane. Its function is as follows. Plays a role in transport between endoplasmic reticulum and Golgi. This is Protein YIPF5 (yipf5) from Xenopus laevis (African clawed frog).